We begin with the raw amino-acid sequence, 285 residues long: Pantothenate synthetase (285 aa).

30 to 37 (MGNLHRGH) serves as a coordination point for ATP. His-37 acts as the Proton donor in catalysis. A (R)-pantoate-binding site is contributed by Gln-61. Residue Gln-61 participates in beta-alanine binding. 149 to 152 (GRKD) serves as a coordination point for ATP. Gln-155 is a (R)-pantoate binding site. Residues Val-178 and 186 to 189 (LSSR) each bind ATP.

It belongs to the pantothenate synthetase family. Homodimer.

The protein resides in the cytoplasm. The catalysed reaction is (R)-pantoate + beta-alanine + ATP = (R)-pantothenate + AMP + diphosphate + H(+). It functions in the pathway cofactor biosynthesis; (R)-pantothenate biosynthesis; (R)-pantothenate from (R)-pantoate and beta-alanine: step 1/1. Its function is as follows. Catalyzes the condensation of pantoate with beta-alanine in an ATP-dependent reaction via a pantoyl-adenylate intermediate. The polypeptide is Pantothenate synthetase (Halorhodospira halophila (strain DSM 244 / SL1) (Ectothiorhodospira halophila (strain DSM 244 / SL1))).